Consider the following 244-residue polypeptide: DNA repair protein RecO (244 aa).

This sequence belongs to the RecO family.

In terms of biological role, involved in DNA repair and RecF pathway recombination. This Geobacter metallireducens (strain ATCC 53774 / DSM 7210 / GS-15) protein is DNA repair protein RecO.